The sequence spans 333 residues: Acyl-CoA wax alcohol acyltransferase 2 (333 aa).

Helical transmembrane passes span 15–35, 38–58, and 130–150; these read VFAL…VIIV, YLVV…WLAF, and TFPG…VPFL.

The protein belongs to the diacylglycerol acyltransferase family. In terms of assembly, monomer. In terms of tissue distribution, expressed in Mueller cells of the retina (at protein level). Abundant in tissues rich in sebaceous glands such as the preputial gland and eyelid.

The protein resides in the endoplasmic reticulum membrane. It catalyses the reaction a long chain fatty alcohol + a fatty acyl-CoA = a wax ester + CoA. The enzyme catalyses all-trans-retinol + an acyl-CoA = an all-trans-retinyl ester + CoA. It carries out the reaction an acyl-CoA + a 1,2-diacyl-sn-glycerol = a triacyl-sn-glycerol + CoA. The catalysed reaction is 9-cis-retinol + a fatty acyl-CoA = 9-cis-retinyl ester + CoA. It catalyses the reaction 11-cis-retinol + a fatty acyl-CoA = 11-cis-retinyl ester + CoA. The enzyme catalyses 13-cis-retinol + a fatty acyl-CoA = 13-cis-retinyl ester + CoA. It carries out the reaction a 1-acylglycerol + an acyl-CoA = a 1,2-diacylglycerol + CoA. The catalysed reaction is 1-O-alkylglycerol + an acyl-CoA = 1-O-alkyl-3-acylglycerol + CoA. It catalyses the reaction a 2-acylglycerol + an acyl-CoA = a 1,2-diacyl-sn-glycerol + CoA. The enzyme catalyses 2-(9Z-octadecenoyl)-glycerol + hexadecanoyl-CoA = 1-hexadecanoyl-2-(9Z-octadecenoyl)-sn-glycerol + CoA. It carries out the reaction 1,2-di-(9Z-octadecenoyl)-sn-glycerol + hexadecanoyl-CoA = 1,2-di-(9Z)-octadecenoyl-3-hexadecanoyl-sn-glycerol + CoA. The catalysed reaction is hexadecan-1-ol + hexadecanoyl-CoA = hexadecanyl hexadecanoate + CoA. It catalyses the reaction hexadecane-1,2-diol + hexadecanoyl-CoA = 2-hydroxyhexadecyl hexadecanoate + CoA. The enzyme catalyses all-trans-retinol + hexadecanoyl-CoA = all-trans-retinyl hexadecanoate + CoA. It carries out the reaction 1,2-di-(9Z-octadecenoyl)-sn-glycerol + (9Z)-octadecenoyl-CoA = 1,2,3-tri-(9Z-octadecenoyl)-glycerol + CoA. The catalysed reaction is hexadecan-1-ol + (9Z)-octadecenoyl-CoA = hexadecanyl (9Z)-octadecenoate + CoA. It catalyses the reaction (9Z)-hexadecen-1-ol + (9Z)-octadecenoyl-CoA = 1-O-(9Z)-hexadecenyl (9Z)-octadecenoate + CoA. The enzyme catalyses octadecan-1-ol + (9Z)-octadecenoyl-CoA = 1-O-octadecyl (9Z)-octadecenoate + CoA. It carries out the reaction (9Z)-octadecen-1-ol + (9Z)-octadecenoyl-CoA = 1-O-(9Z)-octadecenyl (9Z)-octadecenoate + CoA. The catalysed reaction is hexadecan-1-ol + (9Z)-hexadecenoyl-CoA = 1-O-hexadecyl (9Z)-hexadecenoate + CoA. It catalyses the reaction hexadecan-1-ol + octadecanoyl-CoA = hexadecanyl octadecanoate + CoA. The enzyme catalyses 11-cis-retinol + hexadecanoyl-CoA = 11-cis-retinyl hexadecanoate + CoA. It carries out the reaction 1-O-(9Z-octadecenyl)-glycerol + (9Z)-octadecenoyl-CoA = 1-O-(9Z-octadecyl)-3-(9Z-octadecenoyl)-glycerol + CoA. The catalysed reaction is 1-(9Z-octadecenoyl)-glycerol + (9Z)-octadecenoyl-CoA = 1,2-di-(9Z-octadecenoyl)-glycerol + CoA. It catalyses the reaction 11-cis-retinol + tetradecanoyl-CoA = 11-cis-retinyl tetradecanoate + CoA. The enzyme catalyses 9-cis-retinol + tetradecanoyl-CoA = 9-cis-retinyl tetradecanoate + CoA. It carries out the reaction 9-cis-retinol + hexadecanoyl-CoA = 9-cis-retinyl hexadecanoate + CoA. The catalysed reaction is 13-cis-retinol + tetradecanoyl-CoA = 13-cis-retinyl tetradecanoate + CoA. It catalyses the reaction all-trans-retinol + tetradecanoyl-CoA = all-trans-retinyl tetradecanoate + CoA. The enzyme catalyses tetradecan-1-ol + tetradecanoyl-CoA = tetradecanyl tetradecanoate + CoA. With respect to regulation, 11-cis retinoids act as allosteric modulators of acyl-CoA retinol O-fatty-acyltransferase (ARAT) activity by suppressing esterification of 9-cis, 13-cis, or all-trans retinols concurrently increasing the enzyme specificity toward 11-cis isomer. Functionally, acyltransferase that catalyzes the formation of ester bonds between fatty alcohols and fatty acyl-CoAs to form wax monoesters. Shows a preference for medium chain acyl-CoAs from C12 to C16 in length and fatty alcohols shorter than C20, as the acyl donor and acceptor, respectively. Also possesses fatty acyl-CoA retinol acyltransferase (ARAT) activity that preferentially esterifies 11-cis-retinol, a chromophore precursor of bleached opsin pigments in cone cells. Shows higher catalytic efficiency toward 11-cis-retinol versus 9-cis-retinol, 13- cis-retinol and all-trans-retinol substrates. In Mus musculus (Mouse), this protein is Acyl-CoA wax alcohol acyltransferase 2 (Awat2).